The following is a 602-amino-acid chain: uncharacterized protein (602 aa).

The 202-residue stretch at 271-472 (IIDILADILI…RDEEVAKYIF (202 aa)) folds into the MCM domain. 315–322 (TEVGIDKT) serves as a coordination point for ATP.

This sequence belongs to the MCM family.

This is an uncharacterized protein from Methanocaldococcus jannaschii (strain ATCC 43067 / DSM 2661 / JAL-1 / JCM 10045 / NBRC 100440) (Methanococcus jannaschii).